Reading from the N-terminus, the 273-residue chain is Putative pyruvate, phosphate dikinase regulatory protein (273 aa).

153 to 160 (GISRTSKT) contributes to the ADP binding site.

It belongs to the pyruvate, phosphate/water dikinase regulatory protein family. PDRP subfamily.

The enzyme catalyses N(tele)-phospho-L-histidyl/L-threonyl-[pyruvate, phosphate dikinase] + ADP = N(tele)-phospho-L-histidyl/O-phospho-L-threonyl-[pyruvate, phosphate dikinase] + AMP + H(+). It carries out the reaction N(tele)-phospho-L-histidyl/O-phospho-L-threonyl-[pyruvate, phosphate dikinase] + phosphate + H(+) = N(tele)-phospho-L-histidyl/L-threonyl-[pyruvate, phosphate dikinase] + diphosphate. Bifunctional serine/threonine kinase and phosphorylase involved in the regulation of the pyruvate, phosphate dikinase (PPDK) by catalyzing its phosphorylation/dephosphorylation. The protein is Putative pyruvate, phosphate dikinase regulatory protein of Agrobacterium fabrum (strain C58 / ATCC 33970) (Agrobacterium tumefaciens (strain C58)).